The primary structure comprises 584 residues: Long-chain-fatty-acid--AMP ligase FadD23 (584 aa).

2 consecutive transmembrane segments (helical) span residues 199-219 and 225-245; these read YFADTGAVPPLDLFIMSWLPF and LVLGVCAPIIVGCGAVLTSPV.

Belongs to the ATP-dependent AMP-binding enzyme family.

Its subcellular location is the membrane. It carries out the reaction holo-[(hydroxy)phthioceranic acid synthase] + hexadecanoate + ATP = hexadecanoyl-[(hydroxy)phthioceranic acid synthase] + AMP + diphosphate. The catalysed reaction is holo-[(hydroxy)phthioceranic acid synthase] + octadecanoate + ATP = octadecanoyl-[(hydroxy)phthioceranic acid synthase] + AMP + diphosphate. It participates in lipid metabolism; fatty acid biosynthesis. Its function is as follows. Catalyzes the activation of long-chain fatty acids as acyl-adenylates (acyl-AMP), which are then transferred to the multifunctional polyketide synthase (PKS) type III for further chain extension. Involved in the biosynthesis of sulfolipid 1 (SL-1). The chain is Long-chain-fatty-acid--AMP ligase FadD23 (fadD23) from Mycobacterium bovis (strain ATCC BAA-935 / AF2122/97).